The chain runs to 164 residues: Transcription elongation factor GreA (164 aa).

The stretch at 12–38 (RRLERELERLKKERPGVILAIKEAREE) forms a coiled coil.

It belongs to the GreA/GreB family.

Functionally, necessary for efficient RNA polymerase transcription elongation past template-encoded arresting sites. The arresting sites in DNA have the property of trapping a certain fraction of elongating RNA polymerases that pass through, resulting in locked ternary complexes. Cleavage of the nascent transcript by cleavage factors such as GreA or GreB allows the resumption of elongation from the new 3'terminus. GreA releases sequences of 2 to 3 nucleotides. The chain is Transcription elongation factor GreA from Solidesulfovibrio magneticus (strain ATCC 700980 / DSM 13731 / RS-1) (Desulfovibrio magneticus).